A 576-amino-acid polypeptide reads, in one-letter code: RNA-directed RNA polymerase subunit beta (576 aa).

The region spanning 259–391 (RLARDGSLLN…PNRKKTFCDG (133 aa)) is the RdRp catalytic domain. Mg(2+)-binding residues include Asp-274, Asp-359, and Asp-360.

Homodimer; the replicase complex can dimerize. Part of the viral RNA-dependent RNA polymerase complex, the other subunits are the host ribosomal protein S1, EF-Tu and EF-Ts. S1 is needed for the initiation of genomic RNA (+)-strand replication. The cofactor is Mg(2+).

The catalysed reaction is RNA(n) + a ribonucleoside 5'-triphosphate = RNA(n+1) + diphosphate. In terms of biological role, this is the catalytic subunit of the viral RNA-dependent RNA polymerase complex. This complex is involved in viral RNA replication that produces (+)-stranded genomes via a complementary, (-)-stranded intermediate. Binds RNA cooperatively with the host ribosomal protein S1. The chain is RNA-directed RNA polymerase subunit beta from Enterobacteria phage SP (Bacteriophage SP).